A 481-amino-acid chain; its full sequence is Matrilin-3 (481 aa).

The first 27 residues, Met1–Ala27, serve as a signal peptide directing secretion. The region spanning Asp78–Phe253 is the VWFA domain. At Arg193 the chain carries Omega-N-methylarginine. EGF-like domains lie at Ala259–Ser300, Ala301–Ala342, Ala343–Ser384, and Val385–Ser426. Cystine bridges form between Cys263–Cys274, Cys270–Cys284, Cys286–Cys299, Cys305–Cys316, Cys312–Cys326, Cys328–Cys341, Cys347–Cys358, Cys354–Cys368, Cys370–Cys383, Cys389–Cys400, Cys396–Cys410, and Cys412–Cys425. Residue Asn321 is glycosylated (N-linked (GlcNAc...) asparagine). Position 436 is a phosphoserine; by FAM20C (Ser436). Positions Glu451–Glu475 form a coiled coil.

Can form homooligomers (monomers, dimers, trimers and tetramers) and heterooligomers with matrilin-1. Interacts with COMP. Component of a complex containing at least CRELD2, MANF, MATN3 and PDIA4. In terms of tissue distribution, strongly expressed in growing skeletal tissue such as epiphyseal growth plate or in bone undergoing growth and remodeling. In the bone, actively synthesized in osteoblasts and osteocytes. Expressed in cartilage of sternum, femur, vertebrae, trachea, articular and epiphyseal cartilage, cartilage of developing bones and bones.

The protein resides in the secreted. Functionally, major component of the extracellular matrix of cartilage and may play a role in the formation of extracellular filamentous networks. The sequence is that of Matrilin-3 (Matn3) from Mus musculus (Mouse).